The sequence spans 247 residues: MSHRDTLFSAPIARLGDWTFDERVAEVFPDMIQRSVPGYSNIISMIGMLAERFVQPGTQVYDLGCSLGAATLSVRRNIHHDNCKIIAIDNSPAMIERCRRHIDAYKAPTPVDVIEGDIRDIAIENASMVVLNFTLQFLEPSERQALLDKIYQGLNPGGALVLSEKFSFEDAKVGELLFNMHHDFKRANGYSELEISQKRSMLENVMLTDSVETHKARLHQAGFEHSELWFQCFNFGSLVALKAEDAA.

S-adenosyl-L-methionine is bound by residues Tyr39, 64-66 (GCS), 89-90 (DN), 117-118 (DI), Asn132, and Arg199.

Belongs to the class I-like SAM-binding methyltransferase superfamily. Cx-SAM synthase family. As to quaternary structure, homodimer.

The catalysed reaction is prephenate + S-adenosyl-L-methionine = carboxy-S-adenosyl-L-methionine + 3-phenylpyruvate + H2O. Catalyzes the conversion of S-adenosyl-L-methionine (SAM) to carboxy-S-adenosyl-L-methionine (Cx-SAM). The polypeptide is Carboxy-S-adenosyl-L-methionine synthase (Escherichia fergusonii (strain ATCC 35469 / DSM 13698 / CCUG 18766 / IAM 14443 / JCM 21226 / LMG 7866 / NBRC 102419 / NCTC 12128 / CDC 0568-73)).